The primary structure comprises 49 residues: Large ribosomal subunit protein bL33B (49 aa).

This sequence belongs to the bacterial ribosomal protein bL33 family.

This Levilactobacillus brevis (strain ATCC 367 / BCRC 12310 / CIP 105137 / JCM 1170 / LMG 11437 / NCIMB 947 / NCTC 947) (Lactobacillus brevis) protein is Large ribosomal subunit protein bL33B.